We begin with the raw amino-acid sequence, 217 residues long: N-(5'-phosphoribosyl)anthranilate isomerase (217 aa).

It belongs to the TrpF family.

The enzyme catalyses N-(5-phospho-beta-D-ribosyl)anthranilate = 1-(2-carboxyphenylamino)-1-deoxy-D-ribulose 5-phosphate. It functions in the pathway amino-acid biosynthesis; L-tryptophan biosynthesis; L-tryptophan from chorismate: step 3/5. The chain is N-(5'-phosphoribosyl)anthranilate isomerase from Chlorobium chlorochromatii (strain CaD3).